The following is a 209-amino-acid chain: Probable GTP-binding protein EngB (209 aa).

One can recognise an EngB-type G domain in the interval 12–203 (VSFEIIFVGR…RDRLHEMKRD (192 aa)). GTP is bound by residues 20-27 (GRSNVGKS), 45-49 (GVTLR), 62-65 (DMPG), 142-145 (NKMD), and 179-181 (ISA). Positions 27 and 47 each coordinate Mg(2+).

It belongs to the TRAFAC class TrmE-Era-EngA-EngB-Septin-like GTPase superfamily. EngB GTPase family. It depends on Mg(2+) as a cofactor.

Functionally, necessary for normal cell division and for the maintenance of normal septation. This chain is Probable GTP-binding protein EngB, found in Methanosarcina barkeri (strain Fusaro / DSM 804).